The primary structure comprises 402 residues: MKIVDAKVIVTCPGRNFVTLKIVTDQGIYGIGDATLNGREKSVVSYLEDYLIPVLIGRDPQQIEDIWQFFYRGAYWRRGPVGMTALAAIDVALWDIKAKLANMPLYQLLGGKSRERILSYTHANGKDLDSTLEAVRKAKDKGYKAIRVQCGIPGIAKTYGVSTNTKSYEPADADLPSVEVWSTEKYLNYIPDVFAAVRKEFGPDIHLLHDVHHRLTPIEAARLGKALEPYHLFWMEDAVPAENQESFKLIRQHTTTPLAVGEVFNSIHDCRELIQNQWIDYIRTTIVHAGGISQMRRIADFASLFHVRTGFHGATDLSPVCMGAALHFDYWVPNFGIQEHMAHSEQMNAVFPHAYTFNDGYFTPGEKPGHGVDIDEKLAAQYPYKRACLPVNRLEDGTLWHW.

Substrate contacts are provided by Asn37 and His122. The Proton donor/acceptor role is filled by Tyr159. Asp210 lines the Mg(2+) pocket. The active-site Proton donor/acceptor is the His212. Residues Glu236 and Glu262 each contribute to the Mg(2+) site. Residues Glu262, Arg283, His312, Asp316, and Glu339 each contribute to the substrate site.

Belongs to the mandelate racemase/muconate lactonizing enzyme family. GalD subfamily. It depends on Mg(2+) as a cofactor.

The catalysed reaction is D-mannonate = 2-dehydro-3-deoxy-D-gluconate + H2O. Functionally, has low D-mannonate dehydratase activity (in vitro), suggesting that this is not a physiological substrate and that it has no significant role in D-mannonate degradation in vivo. Has no detectable activity with a panel of 70 other acid sugars (in vitro). This is D-galactonate dehydratase family member RspA (rspA) from Cellvibrio japonicus (strain Ueda107) (Pseudomonas fluorescens subsp. cellulosa).